Consider the following 178-residue polypeptide: Ribosome maturation factor RimP (178 aa).

It belongs to the RimP family.

The protein resides in the cytoplasm. Functionally, required for maturation of 30S ribosomal subunits. The polypeptide is Ribosome maturation factor RimP (Streptococcus pyogenes serotype M5 (strain Manfredo)).